A 198-amino-acid polypeptide reads, in one-letter code: Glycerol-3-phosphate acyltransferase (198 aa).

6 helical membrane-spanning segments follow: residues 5–25 (YLII…SIAI), 55–75 (VGLA…YLGF), 79–99 (GSLG…LPVL), 114–134 (VLLF…LIVV), 139–159 (YVSL…LIYI), and 164–184 (YIGL…RSNI).

This sequence belongs to the PlsY family. In terms of assembly, probably interacts with PlsX.

The protein localises to the cell membrane. It catalyses the reaction an acyl phosphate + sn-glycerol 3-phosphate = a 1-acyl-sn-glycero-3-phosphate + phosphate. Its pathway is lipid metabolism; phospholipid metabolism. Functionally, catalyzes the transfer of an acyl group from acyl-phosphate (acyl-PO(4)) to glycerol-3-phosphate (G3P) to form lysophosphatidic acid (LPA). This enzyme utilizes acyl-phosphate as fatty acyl donor, but not acyl-CoA or acyl-ACP. The protein is Glycerol-3-phosphate acyltransferase of Finegoldia magna (strain ATCC 29328 / DSM 20472 / WAL 2508) (Peptostreptococcus magnus).